Reading from the N-terminus, the 623-residue chain is Xaa-Pro aminopeptidase 1 (623 aa).

Arginine 77 provides a ligand contact to a peptide. Lysine 304 carries the post-translational modification N6-acetyllysine. Residue histidine 395 participates in a peptide binding. The Mn(2+) site is built by aspartate 415, aspartate 426, and histidine 489. The a peptide site is built by histidine 489, histidine 498, and glutamate 523. Residues glutamate 523 and glutamate 537 each contribute to the Mn(2+) site.

Belongs to the peptidase M24B family. As to quaternary structure, homodimer. It depends on Mn(2+) as a cofactor.

The protein localises to the cytoplasm. Its subcellular location is the cytosol. The catalysed reaction is Release of any N-terminal amino acid, including proline, that is linked to proline, even from a dipeptide or tripeptide.. Metalloaminopeptidase that catalyzes the removal of a penultimate prolyl residue from the N-termini of peptides, such as Arg-Pro-Pro. Contributes to the degradation of bradykinin. The protein is Xaa-Pro aminopeptidase 1 (XPNPEP1) of Bos taurus (Bovine).